Here is a 370-residue protein sequence, read N- to C-terminus: Putative transposase InsL for insertion sequence element IS186A (370 aa).

This sequence belongs to the transposase 11 family.

Its function is as follows. Involved in the transposition of the insertion sequence IS186. This Escherichia coli (strain K12) protein is Putative transposase InsL for insertion sequence element IS186A (insL1).